A 277-amino-acid polypeptide reads, in one-letter code: NH(3)-dependent NAD(+) synthetase (277 aa).

Position 36-43 (36-43 (GLSGGIDS)) interacts with ATP. Position 42 (Asp-42) interacts with Mg(2+). Arg-118 serves as a coordination point for deamido-NAD(+). Thr-138 is a binding site for ATP. A Mg(2+)-binding site is contributed by Glu-143. ATP contacts are provided by Lys-167 and Ser-189.

The protein belongs to the NAD synthetase family. As to quaternary structure, homodimer.

It catalyses the reaction deamido-NAD(+) + NH4(+) + ATP = AMP + diphosphate + NAD(+) + H(+). It functions in the pathway cofactor biosynthesis; NAD(+) biosynthesis; NAD(+) from deamido-NAD(+) (ammonia route): step 1/1. Catalyzes the ATP-dependent amidation of deamido-NAD to form NAD. Uses ammonia as a nitrogen source. The protein is NH(3)-dependent NAD(+) synthetase of Pelodictyon phaeoclathratiforme (strain DSM 5477 / BU-1).